A 156-amino-acid chain; its full sequence is Rhombotin-1 (156 aa).

LIM zinc-binding domains are found at residues 22-84 (KGCA…LFGT) and 86-148 (GNCA…GQLN).

It localises to the nucleus. In terms of biological role, may be involved in gene regulation within neural lineage cells potentially by direct DNA binding or by binding to other transcription factors. This is Rhombotin-1 from Xenopus laevis (African clawed frog).